The primary structure comprises 248 residues: Ribosomal RNA small subunit methyltransferase G (248 aa).

S-adenosyl-L-methionine-binding positions include glycine 85, phenylalanine 90, 137 to 138, and arginine 156; that span reads IE.

This sequence belongs to the methyltransferase superfamily. RNA methyltransferase RsmG family.

The protein localises to the cytoplasm. In terms of biological role, specifically methylates the N7 position of a guanine in 16S rRNA. The protein is Ribosomal RNA small subunit methyltransferase G of Parasynechococcus marenigrum (strain WH8102).